The sequence spans 562 residues: NAD-dependent malic enzyme (562 aa).

Residue Y101 is the Proton donor of the active site. R154 serves as a coordination point for NAD(+). K172 functions as the Proton acceptor in the catalytic mechanism. E243, D244, and D267 together coordinate a divalent metal cation. The NAD(+) site is built by D267 and N415.

Belongs to the malic enzymes family. Homotetramer. The cofactor is Mg(2+). Mn(2+) serves as cofactor.

The enzyme catalyses (S)-malate + NAD(+) = pyruvate + CO2 + NADH. It catalyses the reaction oxaloacetate + H(+) = pyruvate + CO2. In Vibrio parahaemolyticus serotype O3:K6 (strain RIMD 2210633), this protein is NAD-dependent malic enzyme.